The following is a 343-amino-acid chain: Protein RecA (343 aa).

65–72 (GPESSGKT) lines the ATP pocket.

It belongs to the RecA family.

It localises to the cytoplasm. Can catalyze the hydrolysis of ATP in the presence of single-stranded DNA, the ATP-dependent uptake of single-stranded DNA by duplex DNA, and the ATP-dependent hybridization of homologous single-stranded DNAs. It interacts with LexA causing its activation and leading to its autocatalytic cleavage. The polypeptide is Protein RecA (Campylobacter jejuni subsp. jejuni serotype O:6 (strain 81116 / NCTC 11828)).